The sequence spans 464 residues: GDNF family receptor alpha-2 (464 aa).

An N-terminal signal peptide occupies residues M1–A21. Cystine bridges form between C40–C93, C47–C53, C63–C78, C95–C105, C161–C222, C168–C174, C185–C200, C195–C241, C224–C229, C251–C323, C258–C264, C275–C293, C285–C347, and C325–C335. N-linked (GlcNAc...) asparagine glycosylation occurs at N52. N357 is a glycosylation site (N-linked (GlcNAc...) asparagine). A compositionally biased stretch (polar residues) spans D360–Q374. Positions D360–T392 are disordered. Positions T381–T392 are enriched in low complexity. The N-linked (GlcNAc...) asparagine glycan is linked to N413. The GPI-anchor amidated asparagine moiety is linked to residue N440. The propeptide at S441–L464 is removed in mature form.

This sequence belongs to the GDNFR family. As to quaternary structure, interacts with NRTN ligand and RET: forms a 2:2:2 ternary complex composed of NRTN ligand, GFRA2 and RET receptor. Also forms a 4:4:4 tetrameric complex composed of 4 copies of NRTN ligand, GFRA2 and RET receptor, which prevents endocytosis of RET. Interacts with SORL1.

It is found in the cell membrane. In terms of biological role, receptor for neurturin (NRTN), a growth factor that supports the survival of sympathetic neurons. NRTN-binding leads to autophosphorylation and activation of the RET receptor. Also able to mediate GDNF signaling through the RET tyrosine kinase receptor. This is GDNF family receptor alpha-2 (GFRA2) from Bos taurus (Bovine).